Here is a 708-residue protein sequence, read N- to C-terminus: MSLPAISLYTSPPPGAVYSSEFDPSSRGSSPPCSTAPPSTSHRPPAAAGGLSCLFSSPAAAASPPRAPPHDELGALWQDRSDEPAFAGGGGGYSSSPLKWRDLHHHHHHSPVSVFQGPSSSPAASRSPPASWLAGRDRDRERLFAGFVRNALGSCVDYAPALSPRSEVGGGELAFELDENLAEASPACEPCARELLAGAQARHRIFHEELVVKTFFEAEKAHRGQTRASGDPYLQHCVETAVLLANIGANSTVVSAGLLHDTIDDSFIDYDHIFHMFGAGVADLVEGVSKLSHLSKLARDNNTASRIVEADRLHTMLLAMADARAVLIKLADRVHNMKTLEALPLGKQQRFAKETMEIFVPLANRLGIASWKDQLENLCFKHLNPEEHKDLSSKLTKSFDEVLITSAVDKLDRGLRDAGLSYHNLSGRHKSLYSIHNKMLKKNLTMDEIHDIHGLRLVFEKEEDCYRALDVVHELWPQVPGRFKDYISRPKLNGYRSLHTVVMSENVHPFEVQIRTKEMHLQAEYGFAAHWRYKEGTCRHSFVLQMVEWARWVLTWQCEAMNKERPASLGDSDAIRPPCPFPMHSEDCPYSYTRQCDHDGPIFVILLEHDKMSVQEFQANSTVMNLMDRVGTNTPRWSPYRIPMKEDLRPKVNHEPISDLNRKLSMGDVVELTPALPHESLPNYREEIQRMYDRGGFALATRGGSSRR.

Disordered regions lie at residues 1–50 (MSLP…AAGG) and 109–134 (HSPVSVFQGPSSSPAASRSPPASWLA). Residues 1–58 (MSLPAISLYTSPPPGAVYSSEFDPSSRGSSPPCSTAPPSTSHRPPAAAGGLSCLFSSP) constitute a chloroplast transit peptide. 2 stretches are compositionally biased toward low complexity: residues 29–41 (SSPPCSTAPPSTS) and 118–131 (PSSSPAASRSPPAS). Residues 233 to 337 (YLQHCVETAV…IKLADRVHNM (105 aa)) form the HD domain.

The protein belongs to the RelA/SpoT family.

Its subcellular location is the plastid. It is found in the chloroplast. The enzyme catalyses GTP + ATP = guanosine 3'-diphosphate 5'-triphosphate + AMP. Probable ppGpp (guanosine 3'-diphosphate 5'-diphosphate) synthetase that may be involved in a rapid plant ppGpp-mediated response to pathogens and other stresses. The sequence is that of Probable GTP diphosphokinase RSH3, chloroplastic (RSH3) from Oryza sativa subsp. japonica (Rice).